The primary structure comprises 305 residues: PI-PLC X domain-containing protein 2 (305 aa).

The region spanning 42 to 215 (HLHNLPLSNL…NCQVLIFYHC (174 aa)) is the PI-PLC X-box domain. Active-site residues include H57 and H132.

In terms of tissue distribution, widely expressed.

It is found in the nucleus. The catalysed reaction is a 1,2-diacyl-sn-glycero-3-phospho-(1D-myo-inositol) + H2O = 1D-myo-inositol 1-phosphate + a 1,2-diacyl-sn-glycerol + H(+). Its function is as follows. Catalyzes the hydrolysis of inositol from phosphatidylinositol (1,2-diacyl-sn-glycero-3-phospho-(1D-myo-inositol), PI). Could also hydrolyze various multi-phosphorylated derivatives of PI, such as phosphatidylinositol-4,5 bisphosphate (PIP2), releasing inositol-1,4,5-trisphosphate (IP3) and the protein kinase C activator diacylglycerol (DAG), therefore mediating cell signaling. This Homo sapiens (Human) protein is PI-PLC X domain-containing protein 2 (PLCXD2).